A 507-amino-acid chain; its full sequence is Maturase K (507 aa).

The protein belongs to the intron maturase 2 family. MatK subfamily.

It localises to the plastid. The protein localises to the chloroplast. Functionally, usually encoded in the trnK tRNA gene intron. Probably assists in splicing its own and other chloroplast group II introns. This Persea americana (Avocado) protein is Maturase K.